We begin with the raw amino-acid sequence, 467 residues long: Ergochrome gene cluster transcriptional coactivator CPUR_05432 (467 aa).

Residues 109 to 179 (IAIQCEMLGS…RRGYVAHTPL (71 aa)) enclose the HTH iclR-type domain. The segment at residues 139–158 (IQDVANLSNVPEQQLAQMIG) is a DNA-binding region (H-T-H motif).

Its subcellular location is the nucleus. Functionally, transcriptional coactivator; part of the gene cluster responsible for the typical purple-black color of the ergot sclerotia. The ergochrome gene cluster produces several ergot pigments including the yellow ergochrome secalonic acid and its derivatives, as well as the red anthraquinones endocrocin and clavorubin. With CPUR_05433, coregulates the production of geodin. The sequence is that of Ergochrome gene cluster transcriptional coactivator CPUR_05432 from Claviceps purpurea (strain 20.1) (Ergot fungus).